The following is a 498-amino-acid chain: ATP synthase subunit beta, chloroplastic (498 aa).

T6 is subject to Phosphothreonine. A Phosphoserine modification is found at S13. 172-179 provides a ligand contact to ATP; that stretch reads GGAGVGKT.

This sequence belongs to the ATPase alpha/beta chains family. In terms of assembly, F-type ATPases have 2 components, CF(1) - the catalytic core - and CF(0) - the membrane proton channel. CF(1) has five subunits: alpha(3), beta(3), gamma(1), delta(1), epsilon(1). CF(0) has four main subunits: a(1), b(1), b'(1) and c(9-12).

Its subcellular location is the plastid. The protein localises to the chloroplast thylakoid membrane. The catalysed reaction is ATP + H2O + 4 H(+)(in) = ADP + phosphate + 5 H(+)(out). Produces ATP from ADP in the presence of a proton gradient across the membrane. The catalytic sites are hosted primarily by the beta subunits. The polypeptide is ATP synthase subunit beta, chloroplastic (Nasturtium officinale (Watercress)).